The following is a 184-amino-acid chain: GMP synthase [glutamine-hydrolyzing] subunit A (184 aa).

Positions 3–184 (PLYVVNNHGQ…FENFDGICSE (182 aa)) constitute a Glutamine amidotransferase type-1 domain. The active-site Nucleophile is the Cys-75. Residues His-162 and Glu-164 contribute to the active site.

Heterodimer composed of a glutamine amidotransferase subunit (A) and a GMP-binding subunit (B).

It carries out the reaction XMP + L-glutamine + ATP + H2O = GMP + L-glutamate + AMP + diphosphate + 2 H(+). It participates in purine metabolism; GMP biosynthesis; GMP from XMP (L-Gln route): step 1/1. Functionally, catalyzes the synthesis of GMP from XMP. In Methanoculleus marisnigri (strain ATCC 35101 / DSM 1498 / JR1), this protein is GMP synthase [glutamine-hydrolyzing] subunit A.